The sequence spans 249 residues: Mannose-binding protein C (249 aa).

Residues 1-20 (MSLFTSLPFLLLTAVTASCA) form the signal peptide. Residues 43-101 (GINGIPGKDGRDGAKGEKGEPGQGLRGSQGPPGKMGPQGTPGIPGIPGPIGQKGDPGEN) form the Collagen-like domain. Residues 43 to 103 (GINGIPGKDG…QKGDPGENMG (61 aa)) form a disordered region. Residue Pro48 is modified to 4-hydroxyproline. The segment covering 50–62 (KDGRDGAKGEKGE) has biased composition (basic and acidic residues). Pro63, Pro74, Pro83, and Pro86 each carry 4-hydroxyproline. The span at 79-95 (PQGTPGIPGIPGPIGQK) shows a compositional bias: low complexity. Residues 113–131 (RATLQSELNQIKNWLIFSL) adopt a coiled-coil conformation. A C-type lectin domain is found at 135-246 (VGKKAFFTNG…CSASFLTVCE (112 aa)). 2 disulfide bridges follow: Cys156–Cys245 and Cys223–Cys237.

As to quaternary structure, oligomeric complex of 3 or more homotrimers. Interacts with MASP1 and MASP2. Interacts with MEP1A and MEP1B and may inhibit their catalytic activity. Hydroxylation on proline residues within the sequence motif, GXPG, is most likely to be 4-hydroxy as this fits the requirement for 4-hydroxylation in vertebrates.

It is found in the secreted. In terms of biological role, calcium-dependent lectin involved in innate immune defense. Binds mannose, fucose and N-acetylglucosamine on different microorganisms and activates the lectin complement pathway. Binds to late apoptotic cells, as well as to apoptotic blebs and to necrotic cells, but not to early apoptotic cells, facilitating their uptake by macrophages. This is Mannose-binding protein C (MBL) from Bos taurus (Bovine).